The primary structure comprises 605 residues: Tyrosyl-DNA phosphodiesterase 1 (605 aa).

Residues 81–86 (RKKVKP) carry the Nuclear localization signal motif. H236 (nucleophile) is an active-site residue. K238 contacts substrate. The tract at residues 379-382 (SLGS) is interaction with DNA. The Proton donor/acceptor role is filled by H466. K468 contacts substrate.

Belongs to the tyrosyl-DNA phosphodiesterase family. Ubiquitous, with a low level in roots.

Its subcellular location is the nucleus. With respect to regulation, inhibited by vanadate analogs. Its function is as follows. DNA repair enzyme that can remove a variety of covalent adducts from DNA through hydrolysis of a 3'-phosphodiester bond, giving rise to DNA with a free 3' phosphate. Catalyzes the hydrolysis of dead-end complexes between DNA and the topoisomerase I active site tyrosine residue. In Arabidopsis thaliana (Mouse-ear cress), this protein is Tyrosyl-DNA phosphodiesterase 1.